The sequence spans 664 residues: Cyclic nucleotide-gated channel alpha-2 (664 aa).

The segment covering 1–20 (MTEKSNGVKSSPANNHNNHV) has biased composition (polar residues). Residues 1–49 (MTEKSNGVKSSPANNHNNHVPATIKANGKDESRTRSRPQSAADDDTSSE) form a disordered region. Residues 1-144 (MTEKSNGVKS…PAGDWYYRWL (144 aa)) lie on the Cytoplasmic side of the membrane. The helical transmembrane segment at 145–166 (FVIAMPVLYNWCLLVARACFSD) threads the bilayer. Residues 167–176 (LQRGYFLVWL) lie on the Extracellular side of the membrane. Residues 177-197 (VLDYFSDVVYIADLFIRLRTG) traverse the membrane as a helical segment. At 198–222 (FLEQGLLVKDPKKLRDNYIHTLQFK) the chain is on the cytoplasmic side. The chain crosses the membrane as a helical span at residues 223-241 (LDVASIIPTDLIYFAVGIH). Residues 242 to 246 (NPELR) are Extracellular-facing. Residues 247 to 265 (FNRLLHFARMFEFFDRTET) form a helical membrane-spanning segment. The Cytoplasmic portion of the chain corresponds to 266 to 272 (RTSYPNI). Positions 270–378 (PNIFRISNLV…GNVGSMISNM (109 aa)) are ion conduction pathway. Residues 273–296 (FRISNLVLYILVIIHWNACIYYAI) traverse the membrane as a helical segment. Over 297-319 (SKSIGFGVDTWVYPNITDPEYGY) the chain is Extracellular. 2 helical membrane passes run 320 to 354 (LARE…LFVI) and 355 to 379 (FDFL…SNMN). The tract at residues 337-340 (TIGE) is selectivity filter. A C-linker region spans residues 380–456 (ATRAEFQAKI…STLKKVRIFQ (77 aa)). The Cytoplasmic segment spans residues 380–664 (ATRAEFQAKI…SPEPAAAEQP (285 aa)). The cyclic nucleotide-binding domain stretch occupies residues 460 to 580 (AGLLVELVLK…EERGREILMK (121 aa)). Residues Gly520, Ser523, Arg536, and Thr537 each coordinate 3',5'-cyclic GMP. Positions 536 and 537 each coordinate 3',5'-cyclic AMP. Residues 597–651 (VQEKLKQLETNMETLYTRFGRLLAEYTGAQQKLKQRITVLEVKMKQNTEDDYLSD) adopt a coiled-coil conformation. A disordered region spans residues 644-664 (TEDDYLSDGMNSPEPAAAEQP).

This sequence belongs to the cyclic nucleotide-gated cation channel (TC 1.A.1.5) family. CNGA2 subfamily. In terms of assembly, the olfactory cyclic nucleotide-gated channel is an heterotetramer composed of CNGA2, CNGA4 and CNGB1b subunits with 2:1:1 stoichiometry.

Its subcellular location is the cell projection. It localises to the cilium membrane. It catalyses the reaction Ca(2+)(in) = Ca(2+)(out). It carries out the reaction Na(+)(in) = Na(+)(out). The catalysed reaction is K(+)(in) = K(+)(out). The enzyme catalyses NH4(+)(in) = NH4(+)(out). It catalyses the reaction Rb(+)(in) = Rb(+)(out). It carries out the reaction Li(+)(in) = Li(+)(out). The catalysed reaction is Cs(+)(in) = Cs(+)(out). Its function is as follows. Pore-forming subunit of the olfactory cyclic nucleotide-gated channel. Operates in the cilia of olfactory sensory neurons where chemical stimulation of the odorant is converted to an electrical signal. Mediates odorant-induced cAMP-dependent Ca(2+) influx triggering neuron depolarization. The rise of intracellular Ca(2+) levels potentiates the olfactory response by activating Ca(2+)-dependent Cl(-) channels, but it also serves as a negative feedback signal to desensitize the channel for rapid adaptation to odorants. Conducts cAMP- and cGMP-gated ion currents, with permeability for monovalent and divalent cations. This Oryctolagus cuniculus (Rabbit) protein is Cyclic nucleotide-gated channel alpha-2.